The sequence spans 198 residues: Carnitine operon protein CaiE (198 aa).

Residues 174-198 (KPLTQAEENRPRLKGTTDVKPKSAQ) form a disordered region. A compositionally biased stretch (basic and acidic residues) spans 180–198 (EENRPRLKGTTDVKPKSAQ).

It belongs to the transferase hexapeptide repeat family.

It functions in the pathway amine and polyamine metabolism; carnitine metabolism. Overproduction of CaiE stimulates the activity of CaiB and CaiD. This Salmonella typhimurium (strain LT2 / SGSC1412 / ATCC 700720) protein is Carnitine operon protein CaiE.